The following is a 195-amino-acid chain: MLKFRLILTVLTVLLITVNGQFGVNIENKSSTSSSKSAASKPSGNFAIPTALRRPNPFLQRLPSAAADQEALFQSKTAQAQPQPSAQSTNKPSFQNGQQSGGNQPMYPNQPDPYQTGSYQGPYNSMNSNNNNPPTMAGPVPADRISYQPAPKNTVQSGYQQPMPGQQSMQVPNNGPSLPAGPSYDLHNQYPPQQN.

The signal sequence occupies residues 1–20 (MLKFRLILTVLTVLLITVNG). The disordered stretch occupies residues 26-195 (IENKSSTSSS…LHNQYPPQQN (170 aa)). A glycan (N-linked (GlcNAc...) asparagine) is linked at asparagine 28. Composition is skewed to low complexity over residues 29 to 43 (KSST…SKPS) and 74 to 104 (QSKT…GGNQ). Polar residues-rich tracts occupy residues 112–123 (DPYQTGSYQGPY) and 151–176 (PKNT…NNGP).

As to expression, component of the acid-soluble organic matrix of calcified layers of the shell (at protein level).

It localises to the secreted. This is an uncharacterized protein from Lottia gigantea (Giant owl limpet).